The primary structure comprises 540 residues: Transcription initiation factor IIF subunit alpha (540 aa).

Residues 1–26 (MDSQETKVFENVKQENPDEKKPKVEE) show a composition bias toward basic and acidic residues. Disordered stretches follow at residues 1–39 (MDSQETKVFENVKQENPDEKKPKVEEPDSQNNASTQSQQ) and 70–106 (IDPSKSFVPPIKMQRRDPNAPSSSNGEQNAEQGSSSN). Polar residues-rich tracts occupy residues 29 to 39 (SQNNASTQSQQ) and 89 to 106 (APSSSNGEQNAEQGSSSN). 2 positions are modified to phosphoserine: Ser-259 and Ser-261. Residues 280–382 (MEGNEEDNKK…REEKLKSRFS (103 aa)) are a coiled coil. The tract at residues 341–416 (YESDEEDEDP…SSQLQSPNTS (76 aa)) is disordered. Positions 359-369 (SEEEVLQEEEE) are enriched in acidic residues. Residues 381–416 (FSANASKTNTPRPLERTPSSVSPVKASSQLQSPNTS) show a composition bias toward polar residues. Ser-399 is subject to Phosphoserine.

The protein belongs to the TFIIF alpha subunit family. As to quaternary structure, component of the fcp1/TFIIF/polII complex via interaction of tfg3 with both tfg1/TFIIF-alpha and tfg2/TFIIF-beta subunits.

Its subcellular location is the nucleus. TFIIF is a general transcription initiation factor that binds to RNA polymerase II and helps to recruit it to the initiation complex in collaboration with TFIIB. It promotes transcription elongation. This chain is Transcription initiation factor IIF subunit alpha (tfg1), found in Schizosaccharomyces pombe (strain 972 / ATCC 24843) (Fission yeast).